We begin with the raw amino-acid sequence, 873 residues long: Inner centromere protein A (873 aa).

7 disordered regions span residues 50 to 124 (AEPE…KRMT), 237 to 270 (PANE…VVRK), 282 to 452 (FSLA…PPPH), 484 to 535 (KRNT…KVRR), 566 to 649 (QIDE…LAEQ), 683 to 736 (LERA…EQAA), and 781 to 800 (DLNS…PIPA). The segment covering 60 to 69 (SQKRRRKKRT) has biased composition (basic residues). The segment covering 87–105 (RQSNASWSSSVRRLSVRNQ) has biased composition (low complexity). Residues 239 to 254 (NEQQLNLSNQSATPTG) show a composition bias toward polar residues. Residues 261–270 (SVRRSLVVRK) are compositionally biased toward basic residues. Residues 286 to 297 (SKRESMTREAVR) show a composition bias toward basic and acidic residues. Residues 314-325 (SSTSSQRSYQSS) are compositionally biased toward low complexity. The segment covering 437 to 452 (PSPPCPPSKIVRPPPH) has biased composition (pro residues). 4 stretches are compositionally biased toward basic and acidic residues: residues 491–535 (TDPK…KVRR), 566–584 (QIDE…EEKA), 591–649 (KKQE…LAEQ), and 683–733 (LERA…KAKE). The segment at 494–707 (KTEEKERQRL…EERKKREQQE (214 aa)) is SAH. Residues 782 to 856 (LNSDDSTDDE…RTSSAVWHSP (75 aa)) form an IN box region. A phosphoserine mark is found at Ser-849 and Ser-850.

Belongs to the INCENP family. As to quaternary structure, component of the CPC composed of survivin/birc5, incenp, cdca8/borealin and/or cdca9/dasra-A, and aurkb/aurora-B. Interacts (via C-terminus) with aurkb (via N-terminus and kinase domain). Interacts (via N-terminus) with birc5.1, birc5.2, cdca8 and cdca9. Interacts with mtus1.

It localises to the nucleus. The protein resides in the chromosome. The protein localises to the centromere. It is found in the cytoplasm. Its subcellular location is the cytoskeleton. It localises to the spindle. The protein resides in the midbody. The protein localises to the kinetochore. Its function is as follows. Component of the chromosomal passenger complex (CPC), a complex that acts as a key regulator of mitosis. The CPC complex has essential functions at the centromere in ensuring correct chromosome alignment and segregation and is required for chromatin-induced microtubule stabilization and spindle assembly. Acts as a scaffold regulating CPC localization and activity. The C-terminus associates with aurkb/aurora-B, the N-terminus associated with cdca8/borealin and/or cdca9/dasra-A tethers the CPC to the inner centromere, and the microtubule binding activity within the central SAH domain directs aurkb/aurora-B toward substrates near microtubules. Activates aurkb. In Xenopus laevis (African clawed frog), this protein is Inner centromere protein A (incenp-a).